A 317-amino-acid chain; its full sequence is E3 ubiquitin-protein ligase NRDP1 (317 aa).

The RING-type; degenerate zinc-finger motif lies at 18-57 (CPICSGVLEEPVQAPHCEHAFCNACITQWFSQQQTCPVDR). The stretch at 135-175 (IKHLRSVVQQQQIRIGELEKTAAESKHQLSEQKRDIQLLKA) forms a coiled coil.

It carries out the reaction S-ubiquitinyl-[E2 ubiquitin-conjugating enzyme]-L-cysteine + [acceptor protein]-L-lysine = [E2 ubiquitin-conjugating enzyme]-L-cysteine + N(6)-ubiquitinyl-[acceptor protein]-L-lysine.. It functions in the pathway protein modification; protein ubiquitination. In terms of biological role, acts as E3 ubiquitin-protein ligase and regulates the degradation of target proteins. The sequence is that of E3 ubiquitin-protein ligase NRDP1 (rnf41) from Xenopus laevis (African clawed frog).